The following is a 341-amino-acid chain: NADH-quinone oxidoreductase subunit H (341 aa).

9 helical membrane passes run 4–24 (LVNILFILVPLLLSVAYLTYF), 38–58 (PSVVGPFGLLQPFADAIKLLI), 70–90 (ILFIMAPMLTFILALIAWAVI), 115–135 (VGVLYVLAISSLGVYGVIIAG), 161–181 (IGLIVAAVVITTGTLNLGEMV), 187–207 (MPFWVDLLLMPIGIIFFISLL), 239–259 (LFFLGEYANMILASAMMTIFF), 275–295 (IPGLIWFVLKIVILLFIFIWI), and 314–334 (VFLPISVLWVILISGVLLFTG).

This sequence belongs to the complex I subunit 1 family. In terms of assembly, NDH-1 is composed of 14 different subunits. Subunits NuoA, H, J, K, L, M, N constitute the membrane sector of the complex.

The protein localises to the cell membrane. It catalyses the reaction a quinone + NADH + 5 H(+)(in) = a quinol + NAD(+) + 4 H(+)(out). In terms of biological role, NDH-1 shuttles electrons from NADH, via FMN and iron-sulfur (Fe-S) centers, to quinones in the respiratory chain. The immediate electron acceptor for the enzyme in this species is believed to be ubiquinone. Couples the redox reaction to proton translocation (for every two electrons transferred, four hydrogen ions are translocated across the cytoplasmic membrane), and thus conserves the redox energy in a proton gradient. This subunit may bind ubiquinone. This Wolbachia pipientis wMel protein is NADH-quinone oxidoreductase subunit H.